The sequence spans 477 residues: UDP-N-acetylmuramoylalanine--D-glutamate ligase (477 aa).

Gly127–Thr133 contributes to the ATP binding site.

The protein belongs to the MurCDEF family.

Its subcellular location is the cytoplasm. The catalysed reaction is UDP-N-acetyl-alpha-D-muramoyl-L-alanine + D-glutamate + ATP = UDP-N-acetyl-alpha-D-muramoyl-L-alanyl-D-glutamate + ADP + phosphate + H(+). It functions in the pathway cell wall biogenesis; peptidoglycan biosynthesis. Functionally, cell wall formation. Catalyzes the addition of glutamate to the nucleotide precursor UDP-N-acetylmuramoyl-L-alanine (UMA). The chain is UDP-N-acetylmuramoylalanine--D-glutamate ligase from Prochlorococcus marinus (strain MIT 9515).